The sequence spans 329 residues: Ficolin-2 (329 aa).

A signal peptide spans methionine 1 to alanine 29. The Collagen-like domain occupies glycine 52–leucine 111. Residues glycine 64–serine 113 are disordered. Residues leucine 77–lysine 90 are compositionally biased toward low complexity. The region spanning histidine 112–threonine 329 is the Fibrinogen C-terminal domain. 2 disulfides stabilise this stretch: cysteine 114-cysteine 142 and cysteine 121-cysteine 149. The Ca(2+) site is built by aspartate 265, aspartate 267, serine 269, and serine 271. Cysteine 273 and cysteine 286 are oxidised to a cystine. Asparagine 316 carries N-linked (GlcNAc...) asparagine glycosylation.

This sequence belongs to the ficolin lectin family. Homotrimer. Interacts with elastin. Interacts with MASP1 and MASP2.

The protein localises to the secreted. In terms of biological role, may function in innate immunity through activation of the lectin complement pathway. Calcium-dependent and GlcNAc-binding lectin. In Bos taurus (Bovine), this protein is Ficolin-2 (FCN2).